A 486-amino-acid polypeptide reads, in one-letter code: MAEHDDGDLIAAIRGLARANVLVVGDLMLDRYAYGRVERISPEAPVPILTVTREIAMPGGAGNVVRNLTALDAAAAFVSVVGDDQEGSDLTALIGGQPNVEPWLLVETGRATTVKTRYIAAGQHLIRADRELVMPLTDKLGERLLKIASDAMAATSVTVLSDYRKGVLAPTIARNLIASARSIGRTVIVDPKGADWSHYAEADVITPNRRELAEAVGRDLPDEAAIVGAAREVIGRFGFGAVLCTRSEDGMSLVTVDTVRHYPAEAAEVYDVSGAGDTVVAVLAAGLASGLPLEIAARLSNIAGGLVVGKVGTAVARPDDLVDAVKPASGALRKVVTRQAAAEAAERWRQRGWRIGFTNGCFDLLHPGHVHLLEQARAGCDRLVVGLNADSSVRRLKGATRPVQPEAARAAVLASLASVDLVVIFEEDTPLDLLSAIRPDVLVKGADYTHDTVVGAREVESWGGRVMLAELLPGHSTTATVTRLRS.

Positions 1-331 (MAEHDDGDLI…VDAVKPASGA (331 aa)) are ribokinase. 208–211 (NRRE) contributes to the ATP binding site. Asp277 is an active-site residue. The segment at 357 to 486 (FTNGCFDLLH…TTATVTRLRS (130 aa)) is cytidylyltransferase.

In the N-terminal section; belongs to the carbohydrate kinase PfkB family. This sequence in the C-terminal section; belongs to the cytidylyltransferase family. In terms of assembly, homodimer.

The catalysed reaction is D-glycero-beta-D-manno-heptose 7-phosphate + ATP = D-glycero-beta-D-manno-heptose 1,7-bisphosphate + ADP + H(+). It carries out the reaction D-glycero-beta-D-manno-heptose 1-phosphate + ATP + H(+) = ADP-D-glycero-beta-D-manno-heptose + diphosphate. It functions in the pathway nucleotide-sugar biosynthesis; ADP-L-glycero-beta-D-manno-heptose biosynthesis; ADP-L-glycero-beta-D-manno-heptose from D-glycero-beta-D-manno-heptose 7-phosphate: step 1/4. The protein operates within nucleotide-sugar biosynthesis; ADP-L-glycero-beta-D-manno-heptose biosynthesis; ADP-L-glycero-beta-D-manno-heptose from D-glycero-beta-D-manno-heptose 7-phosphate: step 3/4. Its function is as follows. Catalyzes the phosphorylation of D-glycero-D-manno-heptose 7-phosphate at the C-1 position to selectively form D-glycero-beta-D-manno-heptose-1,7-bisphosphate. Catalyzes the ADP transfer from ATP to D-glycero-beta-D-manno-heptose 1-phosphate, yielding ADP-D-glycero-beta-D-manno-heptose. This Acidiphilium cryptum (strain JF-5) protein is Bifunctional protein HldE.